The sequence spans 314 residues: Mitochondrial 2-oxoglutarate/malate carrier protein (314 aa).

Ala2 carries the N-acetylalanine modification. Ser6 carries the phosphoserine modification. 3 Solcar repeats span residues 23–108 (VKFL…LFER), 117–208 (PGFL…SKQF), and 217–306 (DNIL…MNKA). The helical transmembrane segment at 24-42 (KFLFGGLAGMGATVFVQPL) threads the bilayer. An N6-succinyllysine modification is found at Lys57. Position 73 is an N6-acetyllysine (Lys73). The chain crosses the membrane as a helical span at residues 83–101 (GLSAGLLRQATYTTTRLGI). The residue at position 102 (Tyr102) is a Phosphotyrosine. A run of 3 helical transmembrane segments spans residues 119-140 (FLLK…GTPA), 183-202 (GCIP…LASY), and 222-240 (HFCA…SMPV). Lys256 is subject to N6-acetyllysine. Residues 281–300 (GFTPYYARLGPHTVLTFIFL) traverse the membrane as a helical segment.

This sequence belongs to the mitochondrial carrier (TC 2.A.29) family. As to quaternary structure, interacts with SMIM26.

It is found in the mitochondrion inner membrane. The enzyme catalyses (S)-malate(in) + 2-oxoglutarate(out) = (S)-malate(out) + 2-oxoglutarate(in). It carries out the reaction malonate(in) + 2-oxoglutarate(out) = malonate(out) + 2-oxoglutarate(in). It catalyses the reaction succinate(in) + 2-oxoglutarate(out) = succinate(out) + 2-oxoglutarate(in). The catalysed reaction is maleate(in) + 2-oxoglutarate(out) = maleate(out) + 2-oxoglutarate(in). The enzyme catalyses oxaloacetate(in) + 2-oxoglutarate(out) = oxaloacetate(out) + 2-oxoglutarate(in). Functionally, catalyzes the transport of 2-oxoglutarate (alpha-oxoglutarate) across the inner mitochondrial membrane in an electroneutral exchange for malate. Can also exchange 2-oxoglutarate for other dicarboxylic acids such as malonate, succinate, maleate and oxaloacetate, although with lower affinity. Contributes to several metabolic processes, including the malate-aspartate shuttle, the oxoglutarate/isocitrate shuttle, in gluconeogenesis from lactate, and in nitrogen metabolism. Maintains mitochondrial fusion and fission events, and the organization and morphology of cristae. Involved in the regulation of apoptosis. Helps protect from cytotoxic-induced apoptosis by modulating glutathione levels in mitochondria. This is Mitochondrial 2-oxoglutarate/malate carrier protein (Slc25a11) from Mus musculus (Mouse).